A 299-amino-acid polypeptide reads, in one-letter code: ATP phosphoribosyltransferase (299 aa).

The protein belongs to the ATP phosphoribosyltransferase family. Long subfamily. It depends on Mg(2+) as a cofactor.

The protein localises to the cytoplasm. The catalysed reaction is 1-(5-phospho-beta-D-ribosyl)-ATP + diphosphate = 5-phospho-alpha-D-ribose 1-diphosphate + ATP. The protein operates within amino-acid biosynthesis; L-histidine biosynthesis; L-histidine from 5-phospho-alpha-D-ribose 1-diphosphate: step 1/9. Feedback inhibited by histidine. Functionally, catalyzes the condensation of ATP and 5-phosphoribose 1-diphosphate to form N'-(5'-phosphoribosyl)-ATP (PR-ATP). Has a crucial role in the pathway because the rate of histidine biosynthesis seems to be controlled primarily by regulation of HisG enzymatic activity. The protein is ATP phosphoribosyltransferase of Rhodopirellula baltica (strain DSM 10527 / NCIMB 13988 / SH1).